The following is a 416-amino-acid chain: Probable glucan 1,3-beta-glucosidase A (416 aa).

Positions 1–22 (MFVESAKKALLALSLLAASAQA) are cleaved as a signal peptide. N-linked (GlcNAc...) asparagine glycosylation is present at Asn183. Residue Glu210 is the Proton donor of the active site. 2 disulfide bridges follow: Cys290/Cys415 and Cys316/Cys342. The Nucleophile role is filled by Glu308.

It belongs to the glycosyl hydrolase 5 (cellulase A) family. In terms of assembly, monomer. The cofactor is Mn(2+).

Its subcellular location is the secreted. It carries out the reaction Successive hydrolysis of beta-D-glucose units from the non-reducing ends of (1-&gt;3)-beta-D-glucans, releasing alpha-glucose.. Functionally, beta-glucanases participate in the metabolism of beta-glucan, the main structural component of the cell wall. It could also function biosynthetically as a transglycosylase. The protein is Probable glucan 1,3-beta-glucosidase A (exgA) of Aspergillus niger (strain ATCC MYA-4892 / CBS 513.88 / FGSC A1513).